The chain runs to 95 residues: uncharacterized protein (95 aa).

Residues 3 to 23 (FVIIIAILLLGISLILAFTVL) traverse the membrane as a helical segment.

Its subcellular location is the membrane. This is an uncharacterized protein from Methanocaldococcus jannaschii (strain ATCC 43067 / DSM 2661 / JAL-1 / JCM 10045 / NBRC 100440) (Methanococcus jannaschii).